The primary structure comprises 387 residues: Phosphoglycerate kinase (387 aa).

Substrate is bound by residues 21–23 (DLN), R36, 59–62 (HLGR), R113, and R146. Residues K197, E314, and 340 to 343 (GGDT) each bind ATP.

This sequence belongs to the phosphoglycerate kinase family. Monomer.

It localises to the cytoplasm. It carries out the reaction (2R)-3-phosphoglycerate + ATP = (2R)-3-phospho-glyceroyl phosphate + ADP. Its pathway is carbohydrate degradation; glycolysis; pyruvate from D-glyceraldehyde 3-phosphate: step 2/5. In Proteus mirabilis (strain HI4320), this protein is Phosphoglycerate kinase.